The sequence spans 381 residues: Putative acetyl-CoA C-acetyltransferase VraB (381 aa).

Cysteine 86 serves as the catalytic Acyl-thioester intermediate. Histidine 338 acts as the Proton acceptor in catalysis.

It belongs to the thiolase-like superfamily. Thiolase family.

The protein is Putative acetyl-CoA C-acetyltransferase VraB (vraB) of Staphylococcus haemolyticus (strain JCSC1435).